A 184-amino-acid polypeptide reads, in one-letter code: Threonylcarbamoyl-AMP synthase (184 aa).

The YrdC-like domain maps to 1-184 (MNNLENIVEQ…IFTQHIFRQG (184 aa)).

It belongs to the SUA5 family. TsaC subfamily.

The protein localises to the cytoplasm. The enzyme catalyses L-threonine + hydrogencarbonate + ATP = L-threonylcarbamoyladenylate + diphosphate + H2O. Functionally, required for the formation of a threonylcarbamoyl group on adenosine at position 37 (t(6)A37) in tRNAs that read codons beginning with adenine. Catalyzes the conversion of L-threonine, HCO(3)(-)/CO(2) and ATP to give threonylcarbamoyl-AMP (TC-AMP) as the acyladenylate intermediate, with the release of diphosphate. The protein is Threonylcarbamoyl-AMP synthase of Actinobacillus pleuropneumoniae serotype 7 (strain AP76).